A 23-amino-acid chain; its full sequence is Lycosin-II (23 aa).

A Leucine amide modification is found at leucine 21.

In terms of tissue distribution, expressed by the venom gland.

It is found in the secreted. The protein resides in the target cell membrane. In terms of biological role, has strong antibacterial activity and biofilm inhibition effects against Gram-positive and -negative bacteria including E.coli, S.epidermidis, and A.baumannii and oxacillin-resistant S.aureus and meropenem-resistant P.aeruginosa. Is not cytotoxic against human foreskin fibroblast Hs27 or hemolytic against mammalian red blood cells. Its mechanism of action involves binding to lipoteichoic acid and lipopolysaccharide of Gram-positive and Gram-negative bacterial membranes, respectively, to destroy the bacterial membrane. In addition, it shows anti-inflammatory effects by inhibiting the expression of pro-inflammatory cytokines that are increased during bacterial infection in Hs27 cells. The chain is Lycosin-II from Lycosa singoriensis (Wolf spider).